The sequence spans 583 residues: J protein JJJ2 (583 aa).

The J domain maps to 11–79 (RTTYYSILGL…KLRYDRDLKI (69 aa)). Residues 215–224 (SYSEDPNSCL) show a composition bias toward polar residues. The tract at residues 215–313 (SYSEDPNSCL…SGSHDSNLQS (99 aa)) is disordered. S229 is modified (phosphoserine). Residues 240 to 252 (QQQQQQQQQQQQQ) are compositionally biased toward low complexity. Basic and acidic residues predominate over residues 262–281 (SPDEEKKNNKEPKRESRVSP). Residues 298 to 313 (KTSTFSSGSHDSNLQS) show a composition bias toward polar residues.

It localises to the cytoplasm. It is found in the nucleus. The protein is J protein JJJ2 (JJJ2) of Saccharomyces cerevisiae (strain ATCC 204508 / S288c) (Baker's yeast).